We begin with the raw amino-acid sequence, 362 residues long: MSFEKFFNTAVSSWMSQEGPDSDIVLSSRIRLARNIVDFQFPTVFNNEEAQQIVSLFEQTFAHRFYPSVGRFELLKMSELQPIEKRVLVEKHLISPHLAEDSPFGACLLSENEEISIMINEEDHIRIQCLFPGLQLTEALKVANELDDWIEEHVNYAFDEKLGYLTSCPTNVGTGMRASVMMHLPALVLTQQINRIIPAINQLGLVVRGTYGEGSEALGNIFQISNQITLGKSEEDIVEDLKSVVQQLIAQERMARETLVKTLNIQLEDRVFRSYGILANSRVIESKEAAQCLSDVRLGIDLGYIKNISRNILNELMILTQPGFLQQYAGGVLRPEERDVRRAALIRERLKMEERKAMEGDE.

The region spanning Ile24–Ala255 is the Phosphagen kinase C-terminal domain. ATP is bound by residues Ser27 to Arg31, His92, Arg126, Arg177 to Met181, and Arg208 to Glu213. Residues Arg338–Ala343 carry the RDXXRA motif of the pArg binding pocket involved in allosteric regulation motif.

It belongs to the ATP:guanido phosphotransferase family.

The catalysed reaction is L-arginyl-[protein] + ATP = N(omega)-phospho-L-arginyl-[protein] + ADP + H(+). Appears to be allosterically activated by the binding of pArg-containing polypeptides to the pArg-binding pocket localized in the C-terminal domain of McsB. Its function is as follows. Catalyzes the specific phosphorylation of arginine residues in a large number of proteins. Is part of the bacterial stress response system. Protein arginine phosphorylation has a physiologically important role and is involved in the regulation of many critical cellular processes, such as protein homeostasis, motility, competence, and stringent and stress responses, by regulating gene expression and protein activity. This chain is Protein-arginine kinase, found in Geobacillus sp. (strain WCH70).